A 40-amino-acid polypeptide reads, in one-letter code: Alpha-conotoxin GIC (40 aa).

A propeptide spanning residues 1 to 20 (SDGRNDAAKAFDLISSTVKK) is cleaved from the precursor. 2 disulfides stabilise this stretch: cysteine 22-cysteine 28 and cysteine 23-cysteine 36. The tract at residues 24–26 (SHP) is ser-Xaa-Pro motif, crucial for potent interaction with nAChR. Cysteine 36 is modified (cysteine amide).

In terms of tissue distribution, expressed by the venom duct.

It is found in the secreted. In terms of biological role, alpha-conotoxins bind to the nicotinic acetylcholine receptors (nAChR) and inhibit them. This toxin reversibly blocks neuronal nAChRs (alpha-3/beta-2 = alpha-6 or -3/beta-2 or -3 &gt; alpha-3/beta-4 = alpha-4/beta-2). The polypeptide is Alpha-conotoxin GIC (Conus geographus (Geography cone)).